Reading from the N-terminus, the 224-residue chain is Serum amyloid P-component (224 aa).

The first 20 residues, 1–20 (MDKLLLWMFVFTSLLSEAFC), serve as a signal peptide directing secretion. In terms of domain architecture, Pentraxin (PTX) spans 25–224 (KRKVFVFPRE…YVVIRPRVWD (200 aa)). Residue N52 is glycosylated (N-linked (GlcNAc...) asparagine). C56 and C115 are oxidised to a cystine. Residues D78, N79, E156, Q157, D158, and Q168 each contribute to the Ca(2+) site.

Belongs to the pentraxin family. As to quaternary structure, homopentamer. Pentraxin (or pentaxin) have a discoid arrangement of 5 non-covalently bound subunits. Ca(2+) is required as a cofactor.

It localises to the secreted. This chain is Serum amyloid P-component (Apcs), found in Mus musculus (Mouse).